The following is a 167-amino-acid chain: HTH-type transcriptional repressor YetL (167 aa).

One can recognise an HTH marR-type domain in the interval 26–160 (SLELFLSLFD…FVKMLGDLFE (135 aa)). A DNA-binding region (H-T-H motif) is located at residues 74 to 97 (PTELAKRSNVTKATITGLLDGLAR).

In terms of assembly, homodimer. The N- and C-terminal helices from both subunits stabilize YetL dimer via extensive intersubunit interactions.

With respect to regulation, binding to the yetM cis sequence is clearly inhibited by kaempferol, morin, apigenin and luteolin, slightly inhibited by quercetin and galangin, but no inhibition is observed with the other flavonoids. Flavonoid binding may induce conformational changes and modulate interaction with DNA. Its function is as follows. Negatively regulates yetM expression and its own expression. Binds specifically to corresponding single sites in the divergent yetL and yetM promoter regions, with higher affinity to the yetM region. Recognizes a 28-mer operator of double-stranded DNA that contains a palindromic sequence. The sequence is that of HTH-type transcriptional repressor YetL (yetL) from Bacillus subtilis (strain 168).